Consider the following 420-residue polypeptide: Disease resistance protein CHS1 (420 aa).

The TIR domain maps to 12–167 (RELDVFLSFS…QIADDIRLMF (156 aa)). Glu-86 is a catalytic residue. The region spanning 185–406 (MKALYALLAL…KDIKEVWKIM (222 aa)) is the NB-ARC domain.

As to expression, mostly expressed in leaves and flowers (mainly in sepals), and, at a lower intensity, in stems. Present at low levels in roots and seeds.

It is found in the cytoplasm. The protein resides in the nucleus. It catalyses the reaction NAD(+) + H2O = ADP-D-ribose + nicotinamide + H(+). Its function is as follows. Confers resistance to low temperatures by limiting chloroplast damage and cell death, thus maintaining growth homeostasis. Regulates steryl-esters and sterols accumulation. Limits leaf necrosis associated with virulent bacterial infection (e.g. Pseudomonas syringae pv. tomato DC3000). In Arabidopsis thaliana (Mouse-ear cress), this protein is Disease resistance protein CHS1.